Consider the following 343-residue polypeptide: F17g-G fimbrial adhesin (343 aa).

An N-terminal signal peptide occupies residues 1–22; that stretch reads MTNFYKVCLAVFILVCCNISHA. Residues 23 to 199 are receptor-binding lectin domain; it reads AVSFIGSTEN…LNPFTLNDTV (177 aa). A carbohydrate contacts are provided by residues 65 to 66, 110 to 111, and 138 to 141; these read AN, DT, and STQG. A disulfide bond links Cys75 and Cys132. The tract at residues 200 to 343 is fimbrillin-binding domain; that stretch reads TSCRLLTPSA…GISTFTFSYQ (144 aa). The tract at residues 287–307 is disordered; it reads LKFGPDSPVKGNENQWQLSTG. Residues 298 to 307 are compositionally biased toward polar residues; that stretch reads NENQWQLSTG.

This sequence belongs to the fimbrial protein family.

The protein localises to the fimbrium. Essential fimbrial adhesion factor that mediates binding to N-acetylglucosamine-containing receptors in the host intestinal microvilli, leading to colonization of the intestinal tissue, and diarrhea or septicemia. Also confers adhesiveness to laminin and basement membranes. May be involved in the initiation of polymerization of fimbrillin monomers during fimbrial filament biogenesis. In Escherichia coli, this protein is F17g-G fimbrial adhesin (f17gG).